Consider the following 616-residue polypeptide: Chaperone protein HscA (616 aa).

Belongs to the heat shock protein 70 family.

Chaperone involved in the maturation of iron-sulfur cluster-containing proteins. Has a low intrinsic ATPase activity which is markedly stimulated by HscB. Involved in the maturation of IscU. In Escherichia coli O7:K1 (strain IAI39 / ExPEC), this protein is Chaperone protein HscA.